Reading from the N-terminus, the 205-residue chain is Holliday junction branch migration complex subunit RuvA (205 aa).

Residues 1 to 64 (MIGRLRGIIL…EDAQLLFGFN (64 aa)) form a domain I region. A domain II region spans residues 65–142 (DKQERALFRE…KGLSGDLFNP (78 aa)). Residues 143-156 (VSDIPLASPASAES) are flexible linker. Residues 157-205 (RASDPEAEAAAALVALGYKPQEASRMISKIARPEADCETLIRDALRAAL) form a domain III region.

It belongs to the RuvA family. As to quaternary structure, homotetramer. Forms an RuvA(8)-RuvB(12)-Holliday junction (HJ) complex. HJ DNA is sandwiched between 2 RuvA tetramers; dsDNA enters through RuvA and exits via RuvB. An RuvB hexamer assembles on each DNA strand where it exits the tetramer. Each RuvB hexamer is contacted by two RuvA subunits (via domain III) on 2 adjacent RuvB subunits; this complex drives branch migration. In the full resolvosome a probable DNA-RuvA(4)-RuvB(12)-RuvC(2) complex forms which resolves the HJ.

It is found in the cytoplasm. In terms of biological role, the RuvA-RuvB-RuvC complex processes Holliday junction (HJ) DNA during genetic recombination and DNA repair, while the RuvA-RuvB complex plays an important role in the rescue of blocked DNA replication forks via replication fork reversal (RFR). RuvA specifically binds to HJ cruciform DNA, conferring on it an open structure. The RuvB hexamer acts as an ATP-dependent pump, pulling dsDNA into and through the RuvAB complex. HJ branch migration allows RuvC to scan DNA until it finds its consensus sequence, where it cleaves and resolves the cruciform DNA. In Pectobacterium carotovorum subsp. carotovorum (strain PC1), this protein is Holliday junction branch migration complex subunit RuvA.